Here is a 70-residue protein sequence, read N- to C-terminus: UPF0352 protein PBPRA2586 (70 aa).

The protein belongs to the UPF0352 family.

This is UPF0352 protein PBPRA2586 from Photobacterium profundum (strain SS9).